The following is a 120-amino-acid chain: ATP-dependent Clp protease adapter protein ClpS (120 aa).

Belongs to the ClpS family. In terms of assembly, binds to the N-terminal domain of the chaperone ClpA.

Involved in the modulation of the specificity of the ClpAP-mediated ATP-dependent protein degradation. This is ATP-dependent Clp protease adapter protein ClpS from Pseudomonas syringae pv. tomato (strain ATCC BAA-871 / DC3000).